We begin with the raw amino-acid sequence, 637 residues long: Extracellular metalloproteinase MEP (637 aa).

An N-terminal signal peptide occupies residues 1 to 21 (MRSVDSLLLLGLTGLASQANA). The propeptide occupies 22–246 (HPAKRQPNDS…VVGVVDYVAD (225 aa)). Residue asparagine 288 is glycosylated (N-linked (GlcNAc...) asparagine). Residue histidine 431 participates in Zn(2+) binding. Glutamate 432 is a catalytic residue. Residue histidine 435 participates in Zn(2+) binding.

This sequence belongs to the peptidase M36 family. The cofactor is Zn(2+).

The protein resides in the secreted. In terms of biological role, secreted metalloproteinase that probably acts as a virulence factor. Cleaves Z.mays Endochitinase A (CHIA) between residues 'Gly-29' and 'Cys-30'. This Fusarium vanettenii (strain ATCC MYA-4622 / CBS 123669 / FGSC 9596 / NRRL 45880 / 77-13-4) (Fusarium solani subsp. pisi) protein is Extracellular metalloproteinase MEP (MEP).